The primary structure comprises 284 residues: AA14 family lytic polysaccharide monooxygenase B (284 aa).

The N-terminal stretch at 1–20 is a signal peptide; sequence MGYLSKLVTSVVFAIPLASA. N-linked (GlcNAc...) asparagine glycosylation is found at Asn-42, Asn-96, Asn-142, and Asn-183. Cys-197 and Cys-218 are disulfide-bonded.

The protein belongs to the polysaccharide monooxygenase AA14 family. Cu(2+) is required as a cofactor.

It is found in the secreted. In terms of biological role, lytic polysaccharide monooxygenase (LPMO) that plays decomposes some specific network structures formed between cellulose and hemicellulose in the plant cell walls. Catalysis by LPMOs requires the reduction of the active-site copper from Cu(II) to Cu(I) by a reducing agent and H(2)O(2) or O(2) as a cosubstrate. The polypeptide is AA14 family lytic polysaccharide monooxygenase B (Talaromyces rugulosus (Penicillium rugulosum)).